We begin with the raw amino-acid sequence, 227 residues long: MINDQLPRWVREARVGTRTGGPAMRPKTSDSPYFGWDSEDWPEVTRQLLSEQPLSGDTLVDAVLASWESIFESRLGSGFHIGTQIRPTPQVMGFLLHALIPLELANGDPSWRADLNSSEKDLVYQPDHKYSIEMKTSSHKDQIFGNRSFGVENPGKGKKAKDGYYVAVNFEKWSDAPGRLPRIRTIRYGWLDHTDWVAQKSQTGQQSSLPAVVSNTQLLAIHTGGQR.

Residues Glu-12–Gly-35 are disordered.

The enzyme catalyses Endonucleolytic cleavage of DNA to give specific double-stranded fragments with terminal 5'-phosphates.. In terms of biological role, a P subtype restriction enzyme that recognizes the double-stranded sequence 5'-AGTACT-3' and cleaves after T-3. The protein is Type II restriction enzyme ScaI of Streptomyces caespitosus.